A 351-amino-acid chain; its full sequence is Phenylalanine--tRNA ligase alpha subunit (351 aa).

The disordered stretch occupies residues 45–69 (LGDDAPIPAARRSLGSLPKDQRKDA). Glu269 contacts Mg(2+).

The protein belongs to the class-II aminoacyl-tRNA synthetase family. Phe-tRNA synthetase alpha subunit type 1 subfamily. Tetramer of two alpha and two beta subunits. Requires Mg(2+) as cofactor.

The protein localises to the cytoplasm. The enzyme catalyses tRNA(Phe) + L-phenylalanine + ATP = L-phenylalanyl-tRNA(Phe) + AMP + diphosphate + H(+). In Corynebacterium jeikeium (strain K411), this protein is Phenylalanine--tRNA ligase alpha subunit.